Reading from the N-terminus, the 461-residue chain is Elongation factor 1-alpha (461 aa).

The tr-type G domain maps to 5–242 (KIHINIVVIG…DAILPPSRPT (238 aa)). The segment at 14 to 21 (GHVDSGKS) is G1. 14–21 (GHVDSGKS) lines the GTP pocket. Positions 70–74 (GITID) are G2. The G3 stretch occupies residues 91-94 (DAPG). GTP-binding positions include 91–95 (DAPGH) and 153–156 (NKMD). The segment at 153-156 (NKMD) is G4. Residues 194–196 (SGW) are G5. E301 and E374 each carry 5-glutamyl glycerylphosphorylethanolamine.

This sequence belongs to the TRAFAC class translation factor GTPase superfamily. Classic translation factor GTPase family. EF-Tu/EF-1A subfamily.

It is found in the cytoplasm. This protein promotes the GTP-dependent binding of aminoacyl-tRNA to the A-site of ribosomes during protein biosynthesis. The chain is Elongation factor 1-alpha from Apis mellifera (Honeybee).